The sequence spans 650 residues: Histone-lysine N-methyltransferase family member SUVH9 (650 aa).

Disordered stretches follow at residues 1-24 (MGSSHIPLDPSLNPSPSLIPKLEP) and 95-129 (PVEENPEPEPNPYSTSDSSPSVATQRPRPQPRSSE). A compositionally biased stretch (low complexity) spans 7–20 (PLDPSLNPSPSLIP). The span at 107–118 (YSTSDSSPSVAT) shows a compositional bias: polar residues. A YDG domain is found at 205–352 (GSIPGVQVGD…FGVFKYRLER (148 aa)). Residues 432-490 (SGCDCVNGCGSGCLCEAKNSGEIAYDYNGTLIRQKPLIHECGSACQCPPSCRNRVTQKG) form the Pre-SET domain. The Zn(2+) site is built by Cys-434, Cys-436, Cys-440, Cys-444, Cys-446, Cys-472, Cys-476, Cys-478, and Cys-482. Residues 493–637 (NRLEVFRSLE…PMTELSLDYG (145 aa)) enclose the SET domain.

This sequence belongs to the class V-like SAM-binding methyltransferase superfamily. Histone-lysine methyltransferase family. Suvar3-9 subfamily. In terms of assembly, component of an RNA-directed DNA methylation (RdDM) complex that contains at least MORC6, MORC1/CRT1, MORC2, SWI3D and SUVH9. Interacts directly with MORC6, MORC2 and MORC1/CRT1. Interacts with SWI3B, SWI3C and SWI3D.

Its subcellular location is the nucleus. The protein resides in the chromosome. The protein localises to the centromere. Its function is as follows. Histone methyltransferase family member that plays a role in gene silencing. Together with MORC6 and SUVH2, regulates the silencing of some transposable elements (TEs). According to PubMed:19043555, the protein does not bind S-adenosyl-L-methionine and lacks methyltransferase activity. Instead, it may function downstream of DRM2 in RNA-directed DNA methylation, binding to methylated DNA and recruiting DNA-directed RNA polymerase V to chromatin. The chain is Histone-lysine N-methyltransferase family member SUVH9 (SUVH9) from Arabidopsis thaliana (Mouse-ear cress).